A 2313-amino-acid polypeptide reads, in one-letter code: Serine/threonine-protein kinase smg-1 (2313 aa).

Residues 779–791 (NRKSSDKKPKSTT) show a composition bias toward basic and acidic residues. The tract at residues 779–798 (NRKSSDKKPKSTTEDVPPPA) is disordered. In terms of domain architecture, FAT spans 1045–1528 (ARERLQLVES…VFQVVSGAAS (484 aa)). An HEAT repeat occupies 1478 to 1514 (VHVWKEILPQLFARLSHPSDHIRKTLVDLISRVCTAA). A PI3K/PI4K catalytic domain is found at 1746–2091 (VADNVTILPT…DTIELFQLRV (346 aa)). Residues 1752-1758 (ILPTKTR) form a G-loop region. The interval 1954-1962 (GLGDRHLDN) is catalytic loop. The activation loop stretch occupies residues 1974 to 1998 (HIDYNICFDKGKILRIPETVPFRLS). Residues 2281 to 2313 (RKLSPREEADVLIAEATSSANLAQMYEGWTAWV) form the FATC domain.

This sequence belongs to the PI3/PI4-kinase family. As to quaternary structure, component of a post-splicing multiprotein NMD complex. It depends on Mn(2+) as a cofactor.

Its subcellular location is the cytoplasm. The enzyme catalyses L-seryl-[protein] + ATP = O-phospho-L-seryl-[protein] + ADP + H(+). It catalyses the reaction L-threonyl-[protein] + ATP = O-phospho-L-threonyl-[protein] + ADP + H(+). Its function is as follows. Serine/threonine protein kinase involved in mRNA surveillance. Recognizes the substrate consensus sequence [ST]-Q. Involved in nonsense-mediated decay (NMD) of mRNAs containing premature stop codons by phosphorylating smg-2. This Caenorhabditis briggsae protein is Serine/threonine-protein kinase smg-1 (smg-1).